The primary structure comprises 312 residues: Glyoxylate/hydroxypyruvate reductase A (312 aa).

Residue Arg-227 is part of the active site. His-275 acts as the Proton donor in catalysis.

This sequence belongs to the D-isomer specific 2-hydroxyacid dehydrogenase family. GhrA subfamily.

Its subcellular location is the cytoplasm. The catalysed reaction is glycolate + NADP(+) = glyoxylate + NADPH + H(+). It carries out the reaction (R)-glycerate + NAD(+) = 3-hydroxypyruvate + NADH + H(+). It catalyses the reaction (R)-glycerate + NADP(+) = 3-hydroxypyruvate + NADPH + H(+). In terms of biological role, catalyzes the NADPH-dependent reduction of glyoxylate and hydroxypyruvate into glycolate and glycerate, respectively. The chain is Glyoxylate/hydroxypyruvate reductase A from Escherichia coli (strain UTI89 / UPEC).